We begin with the raw amino-acid sequence, 462 residues long: L-seryl-tRNA(Sec) selenium transferase (462 aa).

At lysine 292 the chain carries N6-(pyridoxal phosphate)lysine.

It belongs to the SelA family. Pyridoxal 5'-phosphate serves as cofactor.

Its subcellular location is the cytoplasm. It carries out the reaction L-seryl-tRNA(Sec) + selenophosphate + H(+) = L-selenocysteinyl-tRNA(Sec) + phosphate. It functions in the pathway aminoacyl-tRNA biosynthesis; selenocysteinyl-tRNA(Sec) biosynthesis; selenocysteinyl-tRNA(Sec) from L-seryl-tRNA(Sec) (bacterial route): step 1/1. Functionally, converts seryl-tRNA(Sec) to selenocysteinyl-tRNA(Sec) required for selenoprotein biosynthesis. The polypeptide is L-seryl-tRNA(Sec) selenium transferase (Geobacter metallireducens (strain ATCC 53774 / DSM 7210 / GS-15)).